The sequence spans 1414 residues: DNA-directed RNA polymerase subunit beta' (1414 aa).

Zn(2+) is bound by residues Cys72, Cys74, Cys87, and Cys90. Mg(2+) contacts are provided by Asp463, Asp465, and Asp467. Zn(2+)-binding residues include Cys811, Cys885, Cys892, and Cys895.

The protein belongs to the RNA polymerase beta' chain family. In terms of assembly, the RNAP catalytic core consists of 2 alpha, 1 beta, 1 beta' and 1 omega subunit. When a sigma factor is associated with the core the holoenzyme is formed, which can initiate transcription. Requires Mg(2+) as cofactor. The cofactor is Zn(2+).

The catalysed reaction is RNA(n) + a ribonucleoside 5'-triphosphate = RNA(n+1) + diphosphate. Its function is as follows. DNA-dependent RNA polymerase catalyzes the transcription of DNA into RNA using the four ribonucleoside triphosphates as substrates. The polypeptide is DNA-directed RNA polymerase subunit beta' (Roseobacter denitrificans (strain ATCC 33942 / OCh 114) (Erythrobacter sp. (strain OCh 114))).